The primary structure comprises 446 residues: MREIVHIQAGQCGNQIGTKFWEVISDEHGIDPAGGYVGDSALQLERINVYYNESSSQKYVPRAALVDLEPGTMDSVRSGPFGQLFRPDNFIFGQTGAGNNWAKGHYTEGAELVDSVLDVVRKECEHCDCLQGFQLTHSLGGGTGSGMGTLLISKIREEYPDRIMNTFSVMPSPKVSDTVVEPYNATLSVHQLVENTDETYCIDNEALYDICFRTLKLTTPTYGDLNHLVSATMSGVTTSLRFPGQLNADLRKLAVNMVPFPRLHFFMPGFAPLTARGSQQYRALTVPELTQQMFDAKNMMAACDPRHGRYLTVAAVFRGPMSMKEVDEQMLAIQNKNSSYFVEWIPNNVKVAVCDIPPRGLKMSATFIGNSTAIQELFKRISEQFSAMFRRKAFLHWFTGEGMDEMEFTEAESNMNDLVSEYQQYQDATADEGEEAFEDDEEEVNE.

An MREI motif motif is present at residues 1-4 (MREI). Residues glutamine 11, glutamate 69, serine 138, glycine 142, threonine 143, and glycine 144 each coordinate GTP. Glutamate 69 serves as a coordination point for Mg(2+). Serine 172 carries the phosphoserine; by CDK1 modification. GTP is bound by residues asparagine 204 and asparagine 226. A 5-glutamyl polyglutamate modification is found at glutamate 438.

It belongs to the tubulin family. In terms of assembly, dimer of alpha and beta chains. A typical microtubule is a hollow water-filled tube with an outer diameter of 25 nm and an inner diameter of 15 nM. Alpha-beta heterodimers associate head-to-tail to form protofilaments running lengthwise along the microtubule wall with the beta-tubulin subunit facing the microtubule plus end conferring a structural polarity. Microtubules usually have 13 protofilaments but different protofilament numbers can be found in some organisms and specialized cells. Mg(2+) is required as a cofactor. Post-translationally, some glutamate residues at the C-terminus are polyglycylated, resulting in polyglycine chains on the gamma-carboxyl group. Glycylation is mainly limited to tubulin incorporated into axonemes (cilia and flagella) whereas glutamylation is prevalent in neuronal cells, centrioles, axonemes, and the mitotic spindle. Both modifications can coexist on the same protein on adjacent residues, and lowering polyglycylation levels increases polyglutamylation, and reciprocally. Cilia and flagella glycylation is required for their stability and maintenance. Flagella glycylation controls sperm motility. Some glutamate residues at the C-terminus are polyglutamylated, resulting in polyglutamate chains on the gamma-carboxyl group. Polyglutamylation plays a key role in microtubule severing by spastin (SPAST). SPAST preferentially recognizes and acts on microtubules decorated with short polyglutamate tails: severing activity by SPAST increases as the number of glutamates per tubulin rises from one to eight, but decreases beyond this glutamylation threshold. Glutamylation is also involved in cilia motility. In terms of processing, phosphorylated on Ser-172 by CDK1 during the cell cycle, from metaphase to telophase, but not in interphase. This phosphorylation inhibits tubulin incorporation into microtubules.

It is found in the cytoplasm. Its subcellular location is the cytoskeleton. Its function is as follows. Tubulin is the major constituent of microtubules, a cylinder consisting of laterally associated linear protofilaments composed of alpha- and beta-tubulin heterodimers. Microtubules grow by the addition of GTP-tubulin dimers to the microtubule end, where a stabilizing cap forms. Below the cap, tubulin dimers are in GDP-bound state, owing to GTPase activity of alpha-tubulin. This is Tubulin beta-6 chain (TUBB6) from Bos taurus (Bovine).